The primary structure comprises 418 residues: L-methionine/branched-chain amino acid exporter YjeH (418 aa).

Residues 1 to 15 (MSGLKQELGLAQGIG) are Periplasmic-facing. The helical transmembrane segment at 16-36 (LLSTSLLGTGVFAVPALAALV) threads the bilayer. Residues 37–41 (AGNNS) lie on the Cytoplasmic side of the membrane. Residues 42–62 (LWAWPVLIILVFPIAIVFAIL) form a helical membrane-spanning segment. Residues 63 to 89 (GRHYPSAGGVAHFVGMAFGSRLERVTG) are Periplasmic-facing. Residues 90–110 (WLFLSVIPVGLPAALQIAAGF) traverse the membrane as a helical segment. Residues 111-113 (GQA) lie on the Cytoplasmic side of the membrane. A helical membrane pass occupies residues 114-134 (MFGWHSWQLLLAELGTLALVW). At 135–147 (YIGTRGASSSANL) the chain is on the periplasmic side. Residues 148-168 (QTVIAGLIVALIVAIWWAGDI) traverse the membrane as a helical segment. Residues 169 to 182 (KPANIPFPAPGNIE) are Cytoplasmic-facing. A helical transmembrane segment spans residues 183–203 (LTGLFAALSVMFWCFVGLEAF). At 204–219 (AHLASEFKNPERDFPR) the chain is on the periplasmic side. A helical membrane pass occupies residues 220 to 240 (ALMIGLLLAGLVYWGCTVVVL). Topologically, residues 241 to 257 (HFDAYGEKMAAAASLPK) are cytoplasmic. Residues 258-278 (IVVQLFGVGALWIACVIGYLA) form a helical membrane-spanning segment. Residues 279-317 (CFASLNIYIQSFARLVWSQAQHNPDHYLARLSSRHIPNN) lie on the Periplasmic side of the membrane. The helical transmembrane segment at 318–338 (ALNAVLGCCVVSTLVIHALEI) threads the bilayer. The Cytoplasmic portion of the chain corresponds to 339–341 (NLD). A helical transmembrane segment spans residues 342-362 (ALIIYANGIFIMIYLLCMLAG). Topologically, residues 363–378 (CKLLQGRYRLLAVVGG) are periplasmic. A helical membrane pass occupies residues 379-399 (LLCVLLLAMVGWKSLYALIML). At 400 to 418 (AGLWLLLPKRKTPENGITT) the chain is on the cytoplasmic side.

Belongs to the amino acid-polyamine-organocation (APC) superfamily. Amino acid efflux (AAE) (TC 2.A.3.13) family.

The protein localises to the cell inner membrane. It carries out the reaction L-methionine(in) + H(+)(out) = L-methionine(out) + H(+)(in). The enzyme catalyses L-leucine(in) + H(+)(out) = L-leucine(out) + H(+)(in). It catalyses the reaction L-isoleucine(in) + H(+)(out) = L-isoleucine(out) + H(+)(in). The catalysed reaction is L-valine(in) + H(+)(out) = L-valine(out) + H(+)(in). With respect to regulation, efflux of L-methionine is inhibited by the proton ionophore carbonyl cyanide m-chlorophenylhydrazone (CCCP). Catalyzes the efflux of L-methionine, L-leucine, L-isoleucine and L-valine. Activity is dependent on electrochemical potential. This is L-methionine/branched-chain amino acid exporter YjeH (yjeH) from Escherichia coli (strain K12).